Here is a 390-residue protein sequence, read N- to C-terminus: MGAFLDKPKTEKHNAHGAGNGLRYGLSSMQGWRVEMEDAHTAVVGIPHGLEDWSFFAVYDGHAGSRVANYCSTHLLEHITTNEDFRAADKSGFALEPSVENVKTGIRTGFLKIDEYMRNFSDLRNGMDRSGSTAVGVMISPTHIYFINCGDSRAVLCRNGQVCFSTQDHKPCNPMEKERIQNAGGSVMIQRVNGSLAVSRALGDYDYKCVDGKGPTEQLVSPEPEVYEILRAEEDEFVVLACDGIWDVMSNEELCEFVNSRLEVSDDLENVCNWVVDTCLHKGSRDNMSIVLVCFANAPKVSDEAVKRDLELDKHLESRVEEIMQKSGEEGMPDLAHVMRILSAENIPNLPPGGGLAGKRNVIEAVYSRLNPNKDNDGGAGDLEDSLVAL.

Basic and acidic residues predominate over residues Met-1–Asn-14. The segment at Met-1–Asn-20 is disordered. The N-myristoyl glycine moiety is linked to residue Gly-2. Lys-12 is covalently cross-linked (Glycyl lysine isopeptide (Lys-Gly) (interchain with G-Cter in ISG15)). The PPM-type phosphatase domain occupies Arg-23 to Phe-295. 4 residues coordinate Mn(2+): Asp-60, Gly-61, Asp-243, and Asp-286. A disordered region spans residues Asn-371–Leu-390. Ser-386 carries the post-translational modification Phosphoserine.

It belongs to the PP2C family. As to quaternary structure, monomer. Interacts with PAK6. Interacts with the phosphorylated form of IKBKB/IKKB. The cofactor is Mg(2+). Mn(2+) serves as cofactor. In terms of processing, isgylation negatively regulates its activity. Post-translationally, N-myristoylation is essential for the recognition of its substrates for dephosphorylation.

Its subcellular location is the cytoplasm. It localises to the cytosol. The protein localises to the membrane. It carries out the reaction O-phospho-L-seryl-[protein] + H2O = L-seryl-[protein] + phosphate. The enzyme catalyses O-phospho-L-threonyl-[protein] + H2O = L-threonyl-[protein] + phosphate. In terms of biological role, enzyme with a broad specificity. Dephosphorylates PRKAA1 and PRKAA2. Inhibits TBK1-mediated antiviral signaling by dephosphorylating it at 'Ser-172'. Plays an important role in the termination of TNF-alpha-mediated NF-kappa-B activation through dephosphorylating and inactivating IKBKB/IKKB. The protein is Protein phosphatase 1B (Ppm1b) of Rattus norvegicus (Rat).